The sequence spans 207 residues: Nucleoplasmin-2 (207 aa).

A compositionally biased stretch (polar residues) spans 1-15 (MSRHSTSSVTETTAK). Disordered regions lie at residues 1-20 (MSRH…MLWG) and 121-207 (DLTW…VTKK). Residues 123–147 (TWEDDEEEEEEEEEEDEDEDADISL) are compositionally biased toward acidic residues. An acidic tract A2 region spans residues 129–152 (EEEEEEEEEDEDEDADISLEEIPV). Positions 165–180 (SIAKKKKVEKEEDETV) match the Bipartite nuclear localization signal motif. Residues 198 to 207 (PRAKKPVTKK) are compositionally biased toward basic residues.

This sequence belongs to the nucleoplasmin family. Homopentamer, when bound to H2A-H2B dimers only. Homodecamer of two stacked pentamers, when bound to H2A-H2B dimers and H3-H4 tetramers simultaneously. As to expression, ovary specific.

The protein localises to the nucleus. Functionally, core histones chaperone involved in chromatin reprogramming, specially during fertilization and early embryonic development. Probably involved in sperm DNA decondensation during fertilization. The chain is Nucleoplasmin-2 (Npm2) from Mus musculus (Mouse).